Here is a 424-residue protein sequence, read N- to C-terminus: Histidine--tRNA ligase (424 aa).

It belongs to the class-II aminoacyl-tRNA synthetase family. In terms of assembly, homodimer.

It localises to the cytoplasm. It carries out the reaction tRNA(His) + L-histidine + ATP = L-histidyl-tRNA(His) + AMP + diphosphate + H(+). The chain is Histidine--tRNA ligase from Shigella dysenteriae serotype 1 (strain Sd197).